The chain runs to 185 residues: Putative sulfur carrier protein YrkF (185 aa).

Residue Cys-15 is the Cysteine persulfide intermediate of the active site. The Rhodanese domain occupies 101–185 (SDESLNILDV…GMRDWTGKTE (85 aa)).

The protein belongs to the sulfur carrier protein TusA family.

The chain is Putative sulfur carrier protein YrkF (yrkF) from Bacillus subtilis (strain 168).